Here is an 81-residue protein sequence, read N- to C-terminus: Exodeoxyribonuclease 7 small subunit (81 aa).

The protein belongs to the XseB family. As to quaternary structure, heterooligomer composed of large and small subunits.

The protein localises to the cytoplasm. The catalysed reaction is Exonucleolytic cleavage in either 5'- to 3'- or 3'- to 5'-direction to yield nucleoside 5'-phosphates.. Bidirectionally degrades single-stranded DNA into large acid-insoluble oligonucleotides, which are then degraded further into small acid-soluble oligonucleotides. In Paramagnetospirillum magneticum (strain ATCC 700264 / AMB-1) (Magnetospirillum magneticum), this protein is Exodeoxyribonuclease 7 small subunit.